We begin with the raw amino-acid sequence, 298 residues long: Enoyl-CoA hydratase ACTT6 (298 aa).

Belongs to the enoyl-CoA hydratase/isomerase family.

It participates in mycotoxin biosynthesis. Functionally, enoyl-CoA hydratase; part of the gene clusters that mediate the biosynthesis of the host-selective toxins (HSTs) ACT-toxins responsible for brown spot of tangerine disease by the tangerine pathotype which affects tangerines and mandarins. ACT-toxins consist of three moieties, 9,10-epoxy-8-hydroxy-9-methyl-decatrienoic acid (EDA), valine and a polyketide. ACT-toxin I is toxic to both citrus and pear; toxin II the 5''-deoxy derivative of ACT-toxin I, is highly toxic to pear and slightly toxic to citrus. On cellular level, ACT-toxins affect plasma membrane of susceptible cells and cause a sudden increase in loss of K(+) after a few minutes of toxin treatment. The acyl-CoA ligase ACTT1, the hydrolase ACTT2, the enoyl-CoA hydratases ACTT3 and ACTT6, and the acyl-CoA synthetase ACTT5 are all involved in the biosynthesis of the AK-, AF- and ACT-toxin common 9,10-epoxy-8-hydroxy-9-methyl-decatrienoic acid (EDA) structural moiety. The exact role of each enzyme, and of additional enzymes identified within the AF-toxin clusters have still to be determined. On the other hand, ACTTS1 to ACTTS4 are specific to the tangerine pathotype. The function of ACTTS3 is to elongate the polyketide chain portion of ACT-toxin that is unique to this toxin. The enoyl-reductase ACTTS2 might complement the missing enoyl-reductase (ER) domain in ACTTS3 in the synthesis of the polyketide portion of ACT-toxin. The roles of the nonribosomal peptide synthetases-related proteins ACTTS1 and ACTTS4 have also still not been elucidated. The protein is Enoyl-CoA hydratase ACTT6 of Alternaria alternata (Alternaria rot fungus).